The following is a 630-amino-acid chain: Alpha-1,3-mannosyltransferase MNT3 (630 aa).

The Cytoplasmic portion of the chain corresponds to 1 to 14 (MLKSLKSRRLILKR). The chain crosses the membrane as a helical; Signal-anchor for type II membrane protein span at residues 15–31 (LVTLLLSLFFSYLIFSA). Topologically, residues 32–630 (SRNVTSSNKL…NDISRTWNAN (599 aa)) are lumenal. N-linked (GlcNAc...) asparagine glycosylation is found at Asn34 and Asn168.

Belongs to the MNN1/MNT family.

Its subcellular location is the golgi apparatus membrane. Its pathway is protein modification; protein glycosylation. In terms of biological role, mannosyltransferase involved in adding the 4th and 5th mannose residues of O-linked glycans. This chain is Alpha-1,3-mannosyltransferase MNT3 (MNT3), found in Saccharomyces cerevisiae (strain ATCC 204508 / S288c) (Baker's yeast).